A 283-amino-acid chain; its full sequence is Putative casein kinase II subunit beta-4 (283 aa).

2 disordered regions span residues 1 to 23 and 35 to 92; these read MYKDRSGGGIMGGGGSSRSEILG and LDKH…SEGD. The segment covering 7–16 has biased composition (gly residues); it reads GGGIMGGGGS. A compositionally biased stretch (polar residues) spans 58–70; the sequence is VPSTSTAKSQLHS.

This sequence belongs to the casein kinase 2 subunit beta family. As to quaternary structure, heterotetramer of two catalytic alpha subunits and two regulatory beta subunits. Post-translationally, phosphorylated by alpha subunit.

The protein resides in the cytoplasm. It localises to the cytosol. Functionally, plays a complex role in regulating the basal catalytic activity of the alpha subunit. The tetrameric holoenzyme CK2, composed of two alpha and two beta subunits, phosphorylates the transcription factor PIF1 after an exposure to light, resulting in a proteasome-dependent degradation of PIF1 and promotion of photomorphogenesis. CK2 phosphorylates translation initiation factors. May participate in the regulation of the initiation of translation. The polypeptide is Putative casein kinase II subunit beta-4 (Arabidopsis thaliana (Mouse-ear cress)).